The sequence spans 197 residues: Ion-translocating oxidoreductase complex subunit B (197 aa).

The hydrophobic stretch occupies residues Met1–Ser26. The region spanning Glu32–Val90 is the 4Fe-4S domain. The [4Fe-4S] cluster site is built by Cys49, Cys52, Cys57, Cys73, Cys115, Cys118, Cys121, Cys125, Cys145, Cys148, Cys151, and Cys155. 2 4Fe-4S ferredoxin-type domains span residues Gln106–Lys135 and Gln136–Ala165.

The protein belongs to the 4Fe4S bacterial-type ferredoxin family. RnfB subfamily. In terms of assembly, the complex is composed of six subunits: RnfA, RnfB, RnfC, RnfD, RnfE and RnfG. [4Fe-4S] cluster serves as cofactor.

The protein resides in the cell inner membrane. Part of a membrane-bound complex that couples electron transfer with translocation of ions across the membrane. This chain is Ion-translocating oxidoreductase complex subunit B, found in Hahella chejuensis (strain KCTC 2396).